We begin with the raw amino-acid sequence, 252 residues long: Cell division protein ZapD (252 aa).

The protein belongs to the ZapD family. Interacts with FtsZ.

It localises to the cytoplasm. Cell division factor that enhances FtsZ-ring assembly. Directly interacts with FtsZ and promotes bundling of FtsZ protofilaments, with a reduction in FtsZ GTPase activity. This is Cell division protein ZapD from Cupriavidus pinatubonensis (strain JMP 134 / LMG 1197) (Cupriavidus necator (strain JMP 134)).